The following is a 136-amino-acid chain: Ribosome-binding factor A (136 aa).

It belongs to the RbfA family. Monomer. Binds 30S ribosomal subunits, but not 50S ribosomal subunits or 70S ribosomes.

It is found in the cytoplasm. Functionally, one of several proteins that assist in the late maturation steps of the functional core of the 30S ribosomal subunit. Associates with free 30S ribosomal subunits (but not with 30S subunits that are part of 70S ribosomes or polysomes). Required for efficient processing of 16S rRNA. May interact with the 5'-terminal helix region of 16S rRNA. This is Ribosome-binding factor A from Photorhabdus laumondii subsp. laumondii (strain DSM 15139 / CIP 105565 / TT01) (Photorhabdus luminescens subsp. laumondii).